The sequence spans 397 residues: DNA-directed RNA polymerase subunit Rpo1C (397 aa).

Belongs to the RNA polymerase beta' chain family. In terms of assembly, part of the RNA polymerase complex.

The protein resides in the cytoplasm. It carries out the reaction RNA(n) + a ribonucleoside 5'-triphosphate = RNA(n+1) + diphosphate. Functionally, DNA-dependent RNA polymerase (RNAP) catalyzes the transcription of DNA into RNA using the four ribonucleoside triphosphates as substrates. Forms part of the jaw domain. In Halobacterium salinarum (strain ATCC 29341 / DSM 671 / R1), this protein is DNA-directed RNA polymerase subunit Rpo1C.